Reading from the N-terminus, the 391-residue chain is S-adenosylmethionine synthase (391 aa).

Residue histidine 14 coordinates ATP. Aspartate 16 is a Mg(2+) binding site. Glutamate 42 serves as a coordination point for K(+). Glutamate 55 and glutamine 98 together coordinate L-methionine. The tract at residues 98–108 (QSVDIAMGVDE) is flexible loop. ATP-binding positions include 172-174 (DGK), 238-239 (RF), aspartate 247, 253-254 (RK), alanine 270, and lysine 274. Aspartate 247 is an L-methionine binding site. Lysine 278 provides a ligand contact to L-methionine.

The protein belongs to the AdoMet synthase family. Homotetramer; dimer of dimers. Mg(2+) serves as cofactor. K(+) is required as a cofactor.

It localises to the cytoplasm. It carries out the reaction L-methionine + ATP + H2O = S-adenosyl-L-methionine + phosphate + diphosphate. The protein operates within amino-acid biosynthesis; S-adenosyl-L-methionine biosynthesis; S-adenosyl-L-methionine from L-methionine: step 1/1. Functionally, catalyzes the formation of S-adenosylmethionine (AdoMet) from methionine and ATP. The overall synthetic reaction is composed of two sequential steps, AdoMet formation and the subsequent tripolyphosphate hydrolysis which occurs prior to release of AdoMet from the enzyme. This is S-adenosylmethionine synthase from Clostridium botulinum (strain Kyoto / Type A2).